We begin with the raw amino-acid sequence, 419 residues long: rRNA methyltransferase 3, mitochondrial (419 aa).

Residues 1 to 39 (MAALCGGMLRGCILKPLGLSGSLQLKRNVRALRRTPVRV) constitute a mitochondrion transit peptide. A disordered region spans residues 42-68 (ADEEGRERKQVEASRQRQPRQNESQAC). The span at 44-56 (EEGRERKQVEASR) shows a compositional bias: basic and acidic residues. 3 residues coordinate S-adenosyl-L-methionine: G357, I381, and L390.

Belongs to the class IV-like SAM-binding methyltransferase superfamily. RNA methyltransferase TrmH family.

The protein resides in the mitochondrion. It carries out the reaction a uridine in rRNA + S-adenosyl-L-methionine = a 2'-O-methyluridine in rRNA + S-adenosyl-L-homocysteine + H(+). In terms of biological role, S-adenosyl-L-methionine-dependent 2'-O-ribose methyltransferase that catalyzes the formation of 2'-O-methylguanosine at position 1370 (Gm1370) in the mitochondrial large subunit ribosomal RNA (mtLSU rRNA), a conserved modification in the peptidyl transferase domain of the mtLSU rRNA. Also required for formation of 2'-O-methyluridine at position 1369 (Um1369) mediated by MRM2. In Xenopus laevis (African clawed frog), this protein is rRNA methyltransferase 3, mitochondrial.